A 1041-amino-acid chain; its full sequence is Sodium/potassium-transporting ATPase subunit alpha (1041 aa).

4 helical membrane-spanning segments follow: residues F115 to I135, N147 to Y167, L312 to G332, and A338 to V358. The active-site 4-aspartylphosphate intermediate is the D394. Position 526 (K526) interacts with ATP. A run of 4 helical transmembrane segments spans residues F808–I828, M870–I890, T935–C955, and W970–P990.

The protein belongs to the cation transport ATPase (P-type) (TC 3.A.3) family. Type IIC subfamily. The sodium/potassium-transporting ATPase is composed of a catalytic alpha subunit, an auxiliary non-catalytic beta subunit and an additional regulatory subunit. In terms of tissue distribution, high levels are found in some adult tissues: Malpighian tubules, indirect flight muscles, tubular leg muscles and throughout the nervous system (brain, optic lobes, retina and ventral thoracic neuromere). Lower levels are detected at the posterior end where the reproductive organs and rectum are located.

Its subcellular location is the cell membrane. It carries out the reaction K(+)(out) + Na(+)(in) + ATP + H2O = K(+)(in) + Na(+)(out) + ADP + phosphate + H(+). Its function is as follows. This is the catalytic component of the active enzyme, which catalyzes the hydrolysis of ATP coupled with the exchange of sodium and potassium ions across the plasma membrane. This action creates the electrochemical gradient of sodium and potassium ions, providing the energy for active transport of various nutrients. In Drosophila melanogaster (Fruit fly), this protein is Sodium/potassium-transporting ATPase subunit alpha (Atpalpha).